The sequence spans 788 residues: Ciliated left-right organizer metallopeptidase (788 aa).

The first 20 residues, 1 to 20 (MLLLLLLLLLLPPLVLRVAA), serve as a signal peptide directing secretion. The Extracellular segment spans residues 21 to 735 (SRCLHDETQK…DHNPSMTHLR (715 aa)). Residues 40-56 (SQLPSKSRSSSLTLPSS) show a composition bias toward low complexity. Positions 40 to 59 (SQLPSKSRSSSLTLPSSRDP) are disordered. His305 contacts Zn(2+). Glu306 is a catalytic residue. His309 lines the Zn(2+) pocket. Residue Asn333 is glycosylated (N-linked (GlcNAc...) asparagine). Residue His385 coordinates Zn(2+). Residues Asn425, Asn491, Asn524, and Asn713 are each glycosylated (N-linked (GlcNAc...) asparagine). The chain crosses the membrane as a helical span at residues 736–756 (LSMGLCLMLLILVGVMGTTAY). Topologically, residues 757-788 (QKRATLPVRPSASYHSPELHSTRVPVRGIREV) are cytoplasmic. The interval 767–788 (SASYHSPELHSTRVPVRGIREV) is disordered.

The protein belongs to the peptidase M8 family. It depends on Zn(2+) as a cofactor.

It is found in the membrane. Putative metalloproteinase that plays a role in left-right patterning process. The sequence is that of Ciliated left-right organizer metallopeptidase from Homo sapiens (Human).